The following is a 390-amino-acid chain: Putative nickel insertion protein (390 aa).

Belongs to the LarC family.

The protein is Putative nickel insertion protein of Geotalea uraniireducens (strain Rf4) (Geobacter uraniireducens).